We begin with the raw amino-acid sequence, 796 residues long: MAKGVNQIINNIRLRKLRKILNQINALSEEFSNFSDEALQAKTKEFKVYLNDNKASLNHILPQAYATVREASKRVLGMYPKDVQILGAIAMHQGNIAEMQTGEGKTLTATMPLYLNALTGKGAYLITTNDYLAKRDFLEMKPLYEWLGLSVSLGFVDIPEYEYAENEKYELYHHDIVYTTNGRLGFDYLIDNLADDIRAKFLPKLNFAIIDEVDSIILDAAQTPLVISGAPRVQSNLFHIVKTFVETLEKDKDFIVNFNKKEVWLTDEGSEKASHYFKVNSIYQQQYFDLVRMIHLSLRAKYLFKYNLDYFIFDGEIVLIDRITGRMLPGTKLQSGLHQAIEALENVEISQDMSVMATITFQNLFKQFDEFSGMTGTGKLGEKEFFDLYSKVVIEIPTHSPIERDDRPDRVFANGDKKNDAILKTVIGIHETQQPVLLITRTAEAAEYFSAELFKRDIPNNLLIAQNVAKEAQMIAEAGQLSAVTVATSMAGRGTDIKLSKEVHDIGGLAVIINEHMDNSRVDRQLRGRSGRQGDPGYSQIFVSLDDDLVKRWSNSNLAENKNLQTMDASKLESSALFKKRVKSIVNKAQRVSEETAMKNREMANEFEKSISVQRDKIYAERNHILEASDFDDFNFEQLARDVFTKDVKNLDLSSERALVNYIYENLSFVFDEDVSNINMQNDEEIIQFLIQQFTQQFNNRLEVAADSYLKLRFIQKSILKAIDSEWIEQVDNLQQLKASVNNRQNGQRNVIFEYHKVALETYEYMSEDIKRKMVRNLCLSILAFDKDGDMVIHFP.

ATP-binding positions include Gln-84, 102-106, and Asp-496; that span reads GEGKT.

Belongs to the SecA family. As to quaternary structure, monomer and homodimer. Part of the essential Sec protein translocation apparatus which comprises SecA, SecYEG and auxiliary proteins SecDF. Other proteins may also be involved.

Its subcellular location is the cell membrane. The protein resides in the cytoplasm. The catalysed reaction is ATP + H2O + cellular proteinSide 1 = ADP + phosphate + cellular proteinSide 2.. Part of the Sec protein translocase complex. Interacts with the SecYEG preprotein conducting channel. Has a central role in coupling the hydrolysis of ATP to the transfer of proteins into and across the cell membrane, serving as an ATP-driven molecular motor driving the stepwise translocation of polypeptide chains across the membrane. This chain is Protein translocase subunit SecA 2, found in Staphylococcus epidermidis (strain ATCC 35984 / DSM 28319 / BCRC 17069 / CCUG 31568 / BM 3577 / RP62A).